Here is a 914-residue protein sequence, read N- to C-terminus: Translation initiation factor IF-2 (914 aa).

Disordered regions lie at residues 52-84 and 98-326; these read GGGK…VKAP and AGGN…GVRL. The segment covering 57 to 68 has biased composition (low complexity); it reads AEGAAKAPAKAA. Residues 69-84 show a composition bias toward basic and acidic residues; the sequence is AKGDAKTAAKGDVKAP. Low complexity predominate over residues 98–138; the sequence is AGGNGEAAAPPAQPGGTATTPAAQATPEAPARPGPAAARPS. Pro residues-rich tracts occupy residues 139-169 and 193-207; these read APAP…PAPK and PRPV…PGAP. A compositionally biased stretch (gly residues) spans 236-296; that stretch reads RPGGGRPGGP…GAAGAFGRPG (61 aa). The span at 300-309 shows a compositional bias: basic residues; the sequence is RRGRKSKRQK. The tr-type G domain maps to 421 to 581; the sequence is TRPPVVTVMG…AVLLTADAAL (161 aa). Residues 430-437, 469-473, and 523-526 each bind GTP; these read GHVDHGKT, DTPGH, and NKID.

It belongs to the TRAFAC class translation factor GTPase superfamily. Classic translation factor GTPase family. IF-2 subfamily.

It localises to the cytoplasm. In terms of biological role, one of the essential components for the initiation of protein synthesis. Protects formylmethionyl-tRNA from spontaneous hydrolysis and promotes its binding to the 30S ribosomal subunits. Also involved in the hydrolysis of GTP during the formation of the 70S ribosomal complex. The polypeptide is Translation initiation factor IF-2 (Mycobacterium avium (strain 104)).